Consider the following 944-residue polypeptide: Isoleucine--tRNA ligase (944 aa).

Positions 58–68 (PYANGSIHIGH) match the 'HIGH' region motif. Glu-563 serves as a coordination point for L-isoleucyl-5'-AMP. The 'KMSKS' region signature appears at 604–608 (KMSKS). An ATP-binding site is contributed by Lys-607. Positions 907, 910, 927, and 930 each coordinate Zn(2+).

Belongs to the class-I aminoacyl-tRNA synthetase family. IleS type 1 subfamily. Monomer. Requires Zn(2+) as cofactor.

It localises to the cytoplasm. The enzyme catalyses tRNA(Ile) + L-isoleucine + ATP = L-isoleucyl-tRNA(Ile) + AMP + diphosphate. Catalyzes the attachment of isoleucine to tRNA(Ile). As IleRS can inadvertently accommodate and process structurally similar amino acids such as valine, to avoid such errors it has two additional distinct tRNA(Ile)-dependent editing activities. One activity is designated as 'pretransfer' editing and involves the hydrolysis of activated Val-AMP. The other activity is designated 'posttransfer' editing and involves deacylation of mischarged Val-tRNA(Ile). This Salmonella choleraesuis (strain SC-B67) protein is Isoleucine--tRNA ligase.